The chain runs to 126 residues: Phosphoribosyl-AMP cyclohydrolase (126 aa).

Asp-76 provides a ligand contact to Mg(2+). Cys-77 is a binding site for Zn(2+). Positions 78 and 80 each coordinate Mg(2+). Zn(2+)-binding residues include Cys-94 and Cys-101.

The protein belongs to the PRA-CH family. As to quaternary structure, homodimer. The cofactor is Mg(2+). Zn(2+) serves as cofactor.

The protein localises to the cytoplasm. The catalysed reaction is 1-(5-phospho-beta-D-ribosyl)-5'-AMP + H2O = 1-(5-phospho-beta-D-ribosyl)-5-[(5-phospho-beta-D-ribosylamino)methylideneamino]imidazole-4-carboxamide. Its pathway is amino-acid biosynthesis; L-histidine biosynthesis; L-histidine from 5-phospho-alpha-D-ribose 1-diphosphate: step 3/9. Catalyzes the hydrolysis of the adenine ring of phosphoribosyl-AMP. The chain is Phosphoribosyl-AMP cyclohydrolase from Vesicomyosocius okutanii subsp. Calyptogena okutanii (strain HA).